The following is a 215-amino-acid chain: UPF0056 membrane protein BU267 (215 aa).

The next 6 membrane-spanning stretches (helical) occupy residues 14 to 34 (FFIG…FTTM), 56 to 76 (LILL…GISI), 81 to 101 (IAGG…QFIK), 120 to 140 (VVPL…TIVW), 150 to 170 (LFLC…CFEA), and 189 to 209 (IMGL…IGAI).

Belongs to the UPF0056 (MarC) family.

Its subcellular location is the cell membrane. The sequence is that of UPF0056 membrane protein BU267 from Buchnera aphidicola subsp. Acyrthosiphon pisum (strain APS) (Acyrthosiphon pisum symbiotic bacterium).